The primary structure comprises 1476 residues: Coiled-coil domain-containing protein 88B (1476 aa).

Residues 253-481 (SHHLALQLAN…RGLLQVLQGQ (229 aa)) adopt a coiled-coil conformation. 4 disordered regions span residues 427–451 (QRSL…SLQD), 509–706 (VAFD…EGAL), 825–866 (RRQW…ERRE), and 1323–1476 (LMRP…SLSQ). The residue at position 436 (serine 436) is a Phosphoserine. The span at 572–586 (SDWSPQESGSPVETQ) shows a compositional bias: polar residues. Phosphoserine is present on serine 596. 3 stretches are compositionally biased toward basic and acidic residues: residues 678 to 690 (EARE…EGTV), 825 to 834 (RRQWEREGSR), and 842 to 866 (AEER…ERRE). Residues 720-1303 (LASGVAEQEA…KIMDQYRVLE (584 aa)) adopt a coiled-coil conformation. A phosphoserine mark is found at serine 1348 and serine 1379. Positions 1448-1469 (LQEHETDANREGPEVQEPEKRP) are enriched in basic and acidic residues.

The protein belongs to the CCDC88 family. Homodimer. Interacts with DOCK8. Interacts (via C-terminus) with intact microtubules. Interacts with dynein-dynactin motor complex. Interacts (via C-terminus) with HSPA5. In terms of tissue distribution, expressed in endothelium (at protein level). Expressed in NK cells (at protein level).

The protein localises to the membrane. It is found in the cytoplasm. Its subcellular location is the cytoskeleton. It localises to the microtubule organizing center. The protein resides in the endoplasmic reticulum. The protein localises to the golgi apparatus. Acts as a positive regulator of T-cell maturation and inflammatory function. Required for several functions of T-cells, in both the CD4(+) and the CD8(+) compartments and this includes expression of cell surface markers of activation, proliferation, and cytokine production in response to specific or non-specific stimulation. Enhances NK cell cytotoxicity by positively regulating polarization of microtubule-organizing center (MTOC) to cytotoxic synapse, lytic granule transport along microtubules, and dynein-mediated clustering to MTOC. Interacts with HSPA5 and stabilizes the interaction between HSPA5 and ERN1, leading to suppression of ERN1-induced JNK activation and endoplasmic reticulum stress-induced apoptosis. The protein is Coiled-coil domain-containing protein 88B (CCDC88B) of Homo sapiens (Human).